A 475-amino-acid polypeptide reads, in one-letter code: Ankyrin repeat, SAM and basic leucine zipper domain-containing protein 1 (475 aa).

Residues 1-25 are disordered; it reads MAAGTLRGLAVAGGGESSDSEDDGW. Ser17, Ser18, and Ser20 each carry phosphoserine. 6 ANK repeats span residues 45–74, 78–107, 110–144, 148–177, 181–210, and 214–243; these read EKNETFKKALTTGDISLVKELLDSGINVDS, YGWTPLMYAASVANAELVRFLLDRGANASF, DKLTILISACSARGSEEQVLKCVELLLSRNADPNT, RLMTPIMYAARDGHTQVVALLVAHGAEVNA, NGYTALTWAARQGHKNVILKLLELGANKML, and DGRTPSEIAKRNKHLEIFNFLSLTLNPLEG. In terms of domain architecture, SAM spans 272 to 334; that stretch reads PYTAFGDLEI…KILAALKELE (63 aa).

Interacts with DDX4, PIWIL1, RANBP9 and TDRD1. As to expression, expressed exclusively in testis and ovary with higher levels in testis.

The protein localises to the cytoplasm. Its function is as follows. Plays a central role during spermatogenesis by repressing transposable elements and preventing their mobilization, which is essential for the germline integrity. Acts via the piRNA metabolic process, which mediates the repression of transposable elements during meiosis by forming complexes composed of piRNAs and Piwi proteins and governs the methylation and subsequent repression of transposons. Its association with pi-bodies suggests a participation in the primary piRNAs metabolic process. Required prior to the pachytene stage to facilitate the production of multiple types of piRNAs, including those associated with repeats involved in regulation of retrotransposons. May act by mediating protein-protein interactions during germ cell maturation. The polypeptide is Ankyrin repeat, SAM and basic leucine zipper domain-containing protein 1 (Mus musculus (Mouse)).